The primary structure comprises 224 residues: Ion-translocating oxidoreductase complex subunit E (224 aa).

5 consecutive transmembrane segments (helical) span residues 51–71 (LGLG…VSLF), 81–101 (IPIY…LMNA), 105–125 (SLYQ…IVIG), 140–160 (MFDG…LGAI), and 194–214 (HFLL…ILAI).

The protein belongs to the NqrDE/RnfAE family. As to quaternary structure, the complex is composed of six subunits: RnfA, RnfB, RnfC, RnfD, RnfE and RnfG.

The protein localises to the cell inner membrane. In terms of biological role, part of a membrane-bound complex that couples electron transfer with translocation of ions across the membrane. This is Ion-translocating oxidoreductase complex subunit E from Pasteurella multocida (strain Pm70).